Consider the following 307-residue polypeptide: Urease accessory protein UreD (307 aa).

This sequence belongs to the UreD family. UreD, UreF and UreG form a complex that acts as a GTP-hydrolysis-dependent molecular chaperone, activating the urease apoprotein by helping to assemble the nickel containing metallocenter of UreC. The UreE protein probably delivers the nickel.

The protein resides in the cytoplasm. In terms of biological role, required for maturation of urease via the functional incorporation of the urease nickel metallocenter. The protein is Urease accessory protein UreD of Prochlorococcus marinus (strain NATL2A).